Consider the following 452-residue polypeptide: Poly(A) polymerase I (452 aa).

Residues Asp-68, Asp-70, and Asp-150 contribute to the active site. Positions 427–452 (EQQRLHPKPKKKYYRPRRRKTTCSAE) are disordered. Positions 431-452 (LHPKPKKKYYRPRRRKTTCSAE) are enriched in basic residues.

This sequence belongs to the tRNA nucleotidyltransferase/poly(A) polymerase family.

The enzyme catalyses RNA(n) + ATP = RNA(n)-3'-adenine ribonucleotide + diphosphate. In terms of biological role, adds poly(A) tail to the 3' end of many RNAs, which usually targets these RNAs for decay. Plays a significant role in the global control of gene expression, through influencing the rate of transcript degradation, and in the general RNA quality control. The protein is Poly(A) polymerase I of Haemophilus influenzae (strain ATCC 51907 / DSM 11121 / KW20 / Rd).